The primary structure comprises 946 residues: Bifunctional glutamine synthetase adenylyltransferase/adenylyl-removing enzyme (946 aa).

The segment at 1 to 440 (MKPLSSPLQQ…VFNELIGDDE (440 aa)) is adenylyl removase. The adenylyl transferase stretch occupies residues 449 to 946 (SEQWRELWQD…ASWQKWLVEE (498 aa)).

This sequence belongs to the GlnE family. Mg(2+) serves as cofactor.

It carries out the reaction [glutamine synthetase]-O(4)-(5'-adenylyl)-L-tyrosine + phosphate = [glutamine synthetase]-L-tyrosine + ADP. It catalyses the reaction [glutamine synthetase]-L-tyrosine + ATP = [glutamine synthetase]-O(4)-(5'-adenylyl)-L-tyrosine + diphosphate. Involved in the regulation of glutamine synthetase GlnA, a key enzyme in the process to assimilate ammonia. When cellular nitrogen levels are high, the C-terminal adenylyl transferase (AT) inactivates GlnA by covalent transfer of an adenylyl group from ATP to specific tyrosine residue of GlnA, thus reducing its activity. Conversely, when nitrogen levels are low, the N-terminal adenylyl removase (AR) activates GlnA by removing the adenylyl group by phosphorolysis, increasing its activity. The regulatory region of GlnE binds the signal transduction protein PII (GlnB) which indicates the nitrogen status of the cell. The protein is Bifunctional glutamine synthetase adenylyltransferase/adenylyl-removing enzyme of Shigella sonnei (strain Ss046).